We begin with the raw amino-acid sequence, 274 residues long: Rhamnulose-1-phosphate aldolase (274 aa).

Residue glutamate 117 is part of the active site. Zn(2+)-binding residues include histidine 141, histidine 143, and histidine 212.

Belongs to the aldolase class II family. RhaD subfamily. As to quaternary structure, homotetramer. The cofactor is Zn(2+).

It localises to the cytoplasm. The catalysed reaction is L-rhamnulose 1-phosphate = (S)-lactaldehyde + dihydroxyacetone phosphate. The protein operates within carbohydrate degradation; L-rhamnose degradation; glycerone phosphate from L-rhamnose: step 3/3. Its function is as follows. Catalyzes the reversible cleavage of L-rhamnulose-1-phosphate to dihydroxyacetone phosphate (DHAP) and L-lactaldehyde. This chain is Rhamnulose-1-phosphate aldolase, found in Shigella sonnei (strain Ss046).